A 308-amino-acid chain; its full sequence is Ceramide synthase 1 LOH3 (308 aa).

6 helical membrane-spanning segments follow: residues 25 to 45 (VLPLFAVFFPSIRFLLDRFVF), 82 to 102 (CVYYLSAEILALSVTYNEPWF), 128 to 148 (LLYMFVAGFYTYSIFALVFWE), 154 to 174 (FGVSMGHHIATLILIVLSYVC), 213 to 233 (FILFVLSWIILRLIYYPFWIL), and 258 to 278 (YMFNTLLYCLLVLHIYWWVLM). Residues 73–287 (RKFKESAWKC…MYRMLVKQIQ (215 aa)) form the TLC domain. 2 positions are modified to phosphoserine: Ser298 and Ser300.

In terms of tissue distribution, expressed ubiquitously at low levels. Not observed in pollen.

It localises to the endoplasmic reticulum membrane. It carries out the reaction (4R)-hydroxysphinganine + a fatty acyl-CoA = an N-acyl-(4R)-4-hydroxysphinganine + CoA + H(+). The catalysed reaction is a sphingoid base + tetracosanoyl-CoA = an N-tetracosanoyl-sphingoid base + CoA + H(+). It catalyses the reaction (4R)-hydroxysphinganine + hexadecanoyl-CoA = N-hexadecanoyl-(4R)-hydroxysphinganine + CoA + H(+). The enzyme catalyses (4R)-hydroxysphinganine + octadecanoyl-CoA = N-octadecanoyl-(4R)-hydroxysphinganine + CoA + H(+). It carries out the reaction (4R)-hydroxysphinganine + eicosanoyl-CoA = N-eicosanoyl-(4R)-hydroxysphinganine + CoA + H(+). The catalysed reaction is docosanoyl-CoA + (4R)-hydroxysphinganine = N-docosanoyl-(4R)-hydroxysphinganine + CoA + H(+). It catalyses the reaction hexacosanoyl-CoA + (4R)-hydroxysphinganine = N-hexacosanoyl-(4R)-hydroxysphinganine + CoA + H(+). The enzyme catalyses tetracosanoyl-CoA + (4R)-hydroxysphinganine = N-tetracosanoyl-(4R)-hydroxysphinganine + CoA + H(+). It carries out the reaction tetracosanoyl-CoA + sphing-4-enine = N-tetracosanoyl-sphing-4-enine + CoA + H(+). The catalysed reaction is sphinga-(4E,8Z)-dienine + tetracosanoyl-CoA = N-tetracosanoylsphinga-(4E,8Z)-dienine + CoA + H(+). It catalyses the reaction sphinga-(4E,8E)-dienine + tetracosanoyl-CoA = N-tetracosanoylsphinga-(4E,8E)-dienine + CoA + H(+). The enzyme catalyses (4R)-hydroxysphing-(8Z)-enine + tetracosanoyl-CoA = N-tetracosanoyl-(4R)-hydroxysphing-(8Z)-enine + CoA + H(+). It carries out the reaction (4R)-hydroxysphing-(8E)-enine + tetracosanoyl-CoA = N-tetracosanoyl-(4R)-hydroxysphing-(8E)-enine + CoA + H(+). The protein operates within sphingolipid metabolism. With respect to regulation, inhibited by the mycotoxin fumonisin B(1), a sphingosine analog mycotoxins produced by pathogenic fungi. Repressed by divalent cation such as magnesium Mg(2+), copper Cu(2+), zinc Zn(2+), manganese Mn(2+), calcium Ca(2+) and cobalt Co(2+). Functionally, essential for plant growth, promotes cell division in root meristems. Catalyzes the biosynthesis of ceramide sphingolipids with C(16) to C(28) fatty acids, structural membrane lipids involved in membrane trafficking (e.g. early endosomes) and cell polarity (e.g. polar auxin transport related proteins); active on a broad substrate spectrum, both regarding chain lengths of fatty acids and the sphingoid base, such as long-chain base (LCB) phytosphingosine (t18:0). Mediates resistance to sphinganine-analog mycotoxins (SAMs, e.g. fumonisin B(1)) by restoring the sphingolipid biosynthesis. Could salvage the transport of GPI-anchored proteins from the endoplasmic reticulum to the Golgi apparatus in ceramides-depleted cells after SAM exposure. Contributes to hypoxic conditions tolerance (e.g. submergences), especially in the dark, by promoting the formation of very-long-chain (VLC) ceramide species (22:1, 24:1 and 26:1) and of VLC unsaturated ceramides, which are modulating CTR1-mediated ethylene signaling leading to endoplasmic reticulum (ER)-to-nucleus translocation of EIN2 and EIN3. This chain is Ceramide synthase 1 LOH3, found in Arabidopsis thaliana (Mouse-ear cress).